Reading from the N-terminus, the 111-residue chain is Large ribosomal subunit protein uL22 (111 aa).

Belongs to the universal ribosomal protein uL22 family. In terms of assembly, part of the 50S ribosomal subunit.

In terms of biological role, this protein binds specifically to 23S rRNA; its binding is stimulated by other ribosomal proteins, e.g. L4, L17, and L20. It is important during the early stages of 50S assembly. It makes multiple contacts with different domains of the 23S rRNA in the assembled 50S subunit and ribosome. Functionally, the globular domain of the protein is located near the polypeptide exit tunnel on the outside of the subunit, while an extended beta-hairpin is found that lines the wall of the exit tunnel in the center of the 70S ribosome. The chain is Large ribosomal subunit protein uL22 from Acholeplasma laidlawii (strain PG-8A).